The chain runs to 355 residues: Probable butyrate kinase (355 aa).

Belongs to the acetokinase family.

Its subcellular location is the cytoplasm. The catalysed reaction is butanoate + ATP = butanoyl phosphate + ADP. This chain is Probable butyrate kinase, found in Listeria monocytogenes serotype 4a (strain HCC23).